Here is a 364-residue protein sequence, read N- to C-terminus: CCA-adding enzyme (364 aa).

The ATP site is built by Gly-19 and Arg-22. Residues Gly-19 and Arg-22 each coordinate CTP. Asp-32 and Asp-34 together coordinate Mg(2+). Residues Arg-102, Arg-148, and Arg-151 each contribute to the ATP site. Residues Arg-102, Arg-148, and Arg-151 each contribute to the CTP site.

The protein belongs to the tRNA nucleotidyltransferase/poly(A) polymerase family. Bacterial CCA-adding enzyme type 2 subfamily. Requires Mg(2+) as cofactor.

It catalyses the reaction a tRNA precursor + 2 CTP + ATP = a tRNA with a 3' CCA end + 3 diphosphate. The enzyme catalyses a tRNA with a 3' CCA end + 2 CTP + ATP = a tRNA with a 3' CCACCA end + 3 diphosphate. Catalyzes the addition and repair of the essential 3'-terminal CCA sequence in tRNAs without using a nucleic acid template. Adds these three nucleotides in the order of C, C, and A to the tRNA nucleotide-73, using CTP and ATP as substrates and producing inorganic pyrophosphate. tRNA 3'-terminal CCA addition is required both for tRNA processing and repair. Also involved in tRNA surveillance by mediating tandem CCA addition to generate a CCACCA at the 3' terminus of unstable tRNAs. While stable tRNAs receive only 3'-terminal CCA, unstable tRNAs are marked with CCACCA and rapidly degraded. This is CCA-adding enzyme from Bordetella bronchiseptica (strain ATCC BAA-588 / NCTC 13252 / RB50) (Alcaligenes bronchisepticus).